A 1100-amino-acid polypeptide reads, in one-letter code: Exportin-T (1100 aa).

This sequence belongs to the exportin family. In terms of assembly, interacts with CEX1, GSP1, GSP2, NSP1, NUP2 and UTP8.

It localises to the nucleus. The protein localises to the cytoplasm. Functionally, tRNA nucleus export receptor which facilitates tRNA translocation across the nuclear pore complex. Preferentially interacts with tRNAs with mature 5'- and 3'-termini and does not distinguish between intron-containing and spliced tRNAs. In the nucleus binds to tRNA and to the Ran-GTPases GSP1 or GSP2 in their active GTP-bound form. Docking of this trimeric complex to the nuclear pore complex (NPC) is mediated through binding to nucleoporins. Upon transit of a nuclear export complex into the cytoplasm, disassembling of the complex and hydrolysis of Ran-GTP to Ran-GDP cause release of the tRNA from the export receptor. The directionality of nuclear export is thought to be conferred by an asymmetric distribution of the GTP- and GDP-bound forms of Ran between the cytoplasm and nucleus. The polypeptide is Exportin-T (LOS1) (Saccharomyces cerevisiae (strain ATCC 204508 / S288c) (Baker's yeast)).